We begin with the raw amino-acid sequence, 207 residues long: Large ribosomal subunit protein uL3 (207 aa).

This sequence belongs to the universal ribosomal protein uL3 family. Part of the 50S ribosomal subunit. Forms a cluster with proteins L14 and L19.

Its function is as follows. One of the primary rRNA binding proteins, it binds directly near the 3'-end of the 23S rRNA, where it nucleates assembly of the 50S subunit. This is Large ribosomal subunit protein uL3 from Desulforapulum autotrophicum (strain ATCC 43914 / DSM 3382 / VKM B-1955 / HRM2) (Desulfobacterium autotrophicum).